The primary structure comprises 530 residues: Autoinducer-2 kinase (530 aa).

This sequence belongs to the FGGY kinase family.

Its subcellular location is the cytoplasm. It carries out the reaction (S)-4,5-dihydroxypentane-2,3-dione + ATP = (2S)-2-hydroxy-3,4-dioxopentyl phosphate + ADP + H(+). Functionally, catalyzes the phosphorylation of autoinducer-2 (AI-2) to phospho-AI-2, which subsequently inactivates the transcriptional regulator LsrR and leads to the transcription of the lsr operon. Phosphorylates the ring-open form of (S)-4,5-dihydroxypentane-2,3-dione (DPD), which is the precursor to all AI-2 signaling molecules, at the C5 position. The sequence is that of Autoinducer-2 kinase from Yersinia pestis bv. Antiqua (strain Antiqua).